The chain runs to 121 residues: MARIAGVDIPRDKRIEVALTYIYGIGSTRAKTILTKAGVNPDIRVKDLEDNDVQKLRNATESFTIEGDLRRQEGMALKRLQDIGCLRGRRHRMSLPVRGQRTRTNARTRRGARKTVAGKKK.

A disordered region spans residues V97–K121. Residues Q100 to K121 are compositionally biased toward basic residues.

Belongs to the universal ribosomal protein uS13 family. As to quaternary structure, part of the 30S ribosomal subunit. Forms a loose heterodimer with protein S19. Forms two bridges to the 50S subunit in the 70S ribosome.

In terms of biological role, located at the top of the head of the 30S subunit, it contacts several helices of the 16S rRNA. In the 70S ribosome it contacts the 23S rRNA (bridge B1a) and protein L5 of the 50S subunit (bridge B1b), connecting the 2 subunits; these bridges are implicated in subunit movement. Contacts the tRNAs in the A and P-sites. The chain is Small ribosomal subunit protein uS13 from Synechococcus sp. (strain CC9311).